Consider the following 165-residue polypeptide: Trypsin alpha-3 (165 aa).

In terms of domain architecture, Peptidase S1 spans 1–163; sequence NSGGVLVSVA…LRSWVVSAAN (163 aa). D26 functions as the Charge relay system in the catalytic mechanism. 2 disulfides stabilise this stretch: C89–C106 and C115–C139. S119 serves as the catalytic Charge relay system.

This sequence belongs to the peptidase S1 family.

Its subcellular location is the secreted. It localises to the extracellular space. It catalyses the reaction Preferential cleavage: Arg-|-Xaa, Lys-|-Xaa.. The polypeptide is Trypsin alpha-3 (Lucilia cuprina (Green bottle fly)).